The chain runs to 134 residues: Ribonuclease P protein component (134 aa).

It belongs to the RnpA family. In terms of assembly, consists of a catalytic RNA component (M1 or rnpB) and a protein subunit.

The enzyme catalyses Endonucleolytic cleavage of RNA, removing 5'-extranucleotides from tRNA precursor.. Functionally, RNaseP catalyzes the removal of the 5'-leader sequence from pre-tRNA to produce the mature 5'-terminus. It can also cleave other RNA substrates such as 4.5S RNA. The protein component plays an auxiliary but essential role in vivo by binding to the 5'-leader sequence and broadening the substrate specificity of the ribozyme. This is Ribonuclease P protein component from Pseudomonas putida (strain GB-1).